Reading from the N-terminus, the 618-residue chain is DNA mismatch repair protein MutL (618 aa).

Residues 348–359 show a composition bias toward polar residues; sequence QTDTARSPTGNF. A disordered region spans residues 348–400; sequence QTDTARSPTGNFESGEVFDYPKSQLQPSHSVSSGGASLGSRSAGGSGGAYRAT. Positions 377-388 are enriched in low complexity; sequence SVSSGGASLGSR.

The protein belongs to the DNA mismatch repair MutL/HexB family.

Functionally, this protein is involved in the repair of mismatches in DNA. It is required for dam-dependent methyl-directed DNA mismatch repair. May act as a 'molecular matchmaker', a protein that promotes the formation of a stable complex between two or more DNA-binding proteins in an ATP-dependent manner without itself being part of a final effector complex. The polypeptide is DNA mismatch repair protein MutL (Pseudoalteromonas translucida (strain TAC 125)).